The chain runs to 163 residues: Nucleotide-binding protein Dhaf_3127 (163 aa).

Belongs to the YajQ family.

Functionally, nucleotide-binding protein. The protein is Nucleotide-binding protein Dhaf_3127 of Desulfitobacterium hafniense (strain DSM 10664 / DCB-2).